A 1328-amino-acid polypeptide reads, in one-letter code: ATP-dependent DNA helicase hus2/rqh1 (1328 aa).

2 stretches are compositionally biased toward low complexity: residues 217–236 (NNLP…NDNN) and 244–254 (ASPTPSSVSSQ). Residues 217–254 (NNLPFPRLNNNNTNNNNDNNAIEKRDSASPTPSSVSSQ) are disordered. The Helicase ATP-binding domain maps to 528–707 (INGTLSGKDV…INTLRMENCL (180 aa)). 555-562 (AVIEGGAS) is an ATP binding site. A DEAH box motif is present at residues 651 to 654 (DEAH). The region spanning 728–876 (LYTELYRFIS…ETKERQRQML (149 aa)) is the Helicase C-terminal domain. The HRDC domain maps to 1115–1195 (IDVMTRCLKD…QKFIDEKEQN (81 aa)). Disordered stretches follow at residues 1224–1247 (EQGF…GDEE) and 1260–1328 (NSQS…QNYR). Positions 1260–1269 (NSQSLTQTGS) are enriched in polar residues. The segment covering 1283 to 1300 (KSYRHKRGSTSYSRKRKY) has biased composition (basic residues).

This sequence belongs to the helicase family. RecQ subfamily. As to quaternary structure, interacts with top3.

Its subcellular location is the nucleus. It catalyses the reaction Couples ATP hydrolysis with the unwinding of duplex DNA by translocating in the 3'-5' direction.. The enzyme catalyses ATP + H2O = ADP + phosphate + H(+). Functionally, ATP-dependent 3'-5' DNA-helicase. Has a role in the repair of UV-induced DNA damage in G2 via recombination-mediated repair. Also has a role in the repair of infrared-induced double DNA strand breaks. This Schizosaccharomyces pombe (strain 972 / ATCC 24843) (Fission yeast) protein is ATP-dependent DNA helicase hus2/rqh1.